The primary structure comprises 720 residues: Connector enhancer of kinase suppressor of ras 1 (720 aa).

Residues 7 to 70 (WTPGKVATWL…LGGVEQLQAL (64 aa)) form the SAM domain. Positions 78 to 164 (NLQSLTEGLL…QVLHEDGPAA (87 aa)) constitute a CRIC domain. The PDZ domain maps to 196-285 (KAVLEQVQLD…GLSLVLKKIP (90 aa)). The tract at residues 285–390 (PIPETPPQTP…RKKSKGLATR (106 aa)) is disordered. Residues 304 to 317 (RSPSLSLAPLSPRA) show a composition bias toward low complexity. Residues Ser-307 and Ser-314 each carry the phosphoserine modification. The span at 348–359 (EPLPIPPEPPAI) shows a compositional bias: pro residues. A compositionally biased stretch (basic residues) spans 379 to 390 (VGRKKSKGLATR). The PH domain occupies 403 to 502 (RPDCDGWLLL…WVRHLITCIS (100 aa)). Residues 504 to 573 (YQSPGRAPPP…TSFGSLTDSS (70 aa)) are disordered. A compositionally biased stretch (acidic residues) spans 518 to 530 (CYSETEAEDPDDE). Positions 533–546 (SHSASPSPAQAGSP) are enriched in low complexity. Residues 553-571 (PAATPTQRSPRTSFGSLTD) show a composition bias toward polar residues. Residues 615 to 646 (QLNERVHRVRALQSTLKAKLQELQVLEEVLGD) are a coiled coil. Residues 676-720 (QAEGSSHILTSDSTEQSPHSLPSDPEEHSHLCPLTSESSLRPPDL) form a disordered region. Over residues 678–695 (EGSSHILTSDSTEQSPHS) the composition is skewed to polar residues.

It belongs to the CNKSR family. As to quaternary structure, interacts with RHO and RALGDS. Phosphorylated on tyrosine.

The protein resides in the cytoplasm. Its subcellular location is the membrane. In terms of biological role, may function as an adapter protein or regulator of Ras signaling pathways. This Homo sapiens (Human) protein is Connector enhancer of kinase suppressor of ras 1 (CNKSR1).